A 64-amino-acid polypeptide reads, in one-letter code: Conotoxin Pn-B01122 (64 aa).

An N-terminal signal peptide occupies residues 1–22; the sequence is MRCLPVFVILLLLIASAPSVDA. Residues 23–48 constitute a propeptide that is removed on maturation; sequence RPKTKDDIPLVSFQDNAKRALQILSN.

The protein belongs to the conotoxin T superfamily. Contains 2 disulfide bonds that can be either 'C1-C3, C2-C4' or 'C1-C4, C2-C3', since these disulfide connectivities have been observed for conotoxins with cysteine framework V (for examples, see AC P0DQQ7 and AC P81755). In terms of tissue distribution, expressed by the venom duct.

It localises to the secreted. The polypeptide is Conotoxin Pn-B01122 (Conus pennaceus (Feathered cone)).